Here is a 199-residue protein sequence, read N- to C-terminus: FMN-dependent NADH:quinone oxidoreductase (199 aa).

Ser10 is an FMN binding site.

The protein belongs to the azoreductase type 1 family. In terms of assembly, homodimer. FMN is required as a cofactor.

It catalyses the reaction 2 a quinone + NADH + H(+) = 2 a 1,4-benzosemiquinone + NAD(+). It carries out the reaction N,N-dimethyl-1,4-phenylenediamine + anthranilate + 2 NAD(+) = 2-(4-dimethylaminophenyl)diazenylbenzoate + 2 NADH + 2 H(+). Quinone reductase that provides resistance to thiol-specific stress caused by electrophilic quinones. In terms of biological role, also exhibits azoreductase activity. Catalyzes the reductive cleavage of the azo bond in aromatic azo compounds to the corresponding amines. This is FMN-dependent NADH:quinone oxidoreductase from Cellvibrio japonicus (strain Ueda107) (Pseudomonas fluorescens subsp. cellulosa).